We begin with the raw amino-acid sequence, 729 residues long: Ubiquitin carboxyl-terminal hydrolase BAP1 (729 aa).

In terms of domain architecture, UCH catalytic spans 4–235 (GWLELESDPG…IRFNLMAVVP (232 aa)). Residues 56–60 (RRSRR) carry the Arg-finger motif motif. Cys91 serves as the catalytic Nucleophile. The active-site Proton donor is His169. A Phosphoserine modification is found at Ser292. The tract at residues 301–351 (APAASEGNHTDGAEEAAGSCAQAPSHSPPNKPKLVVKPPGSSLNGVHPNPT) is disordered. Residues 363–366 (NHNY) carry the HBM-like motif motif. Phosphoserine is present on residues Ser369 and Ser395. Disordered stretches follow at residues 372-435 (QEEE…SADG) and 464-524 (SIKT…SPVT). Over residues 395–409 (SDDEDDYEDDEEDDV) the composition is skewed to acidic residues. The span at 480-524 (THSQPSPTPSNESTDTASEIGSAFNSPLRSPIRSANPTRPSSPVT) shows a compositional bias: polar residues. At Thr493 the chain carries Phosphothreonine. 4 positions are modified to phosphoserine: Ser521, Ser537, Ser585, and Ser597. The segment at 575 to 623 (LTEGGKGSSPSIRPIQGSQGSSSPVEKEVVEATDSREKTGMVRPGEPLS) is disordered. The segment covering 582–598 (SSPSIRPIQGSQGSSSP) has biased composition (polar residues). An interaction with BRCA1 region spans residues 596–721 (SSPVEKEVVE…QRKPDRRKRS (126 aa)). The span at 599–614 (VEKEVVEATDSREKTG) shows a compositional bias: basic and acidic residues. The stretch at 636-656 (LKCVEAEIANYEACLKEEVEK) forms a coiled coil. The interaction with YY1 stretch occupies residues 642–686 (EIANYEACLKEEVEKRKKFKIDDQRRTHNYDEFICTFISMLAQEG). Residues 670–698 (NYDEFICTFISMLAQEGMLANLVEQNISV) enclose the ULD domain. Positions 699 to 701 (RRR) are interaction with nucleosomal DNA forming a DNA clamp with ASXL1. The Classical bipartite Nuclear localization signal (NLS) signature appears at 699–722 (RRRQGVSIGRLHKQRKPDRRKRSR). The disordered stretch occupies residues 703–729 (GVSIGRLHKQRKPDRRKRSRPYKAKRQ). The interval 713–729 (RKPDRRKRSRPYKAKRQ) is positively charged C-terminal extension (CTE). The Non-classical PY-nuclear localization signal (PY-NLS) signature appears at 717–724 (RRKRSRPY).

Belongs to the peptidase C12 family. BAP1 subfamily. In terms of assembly, core component of the polycomb repressive deubiquitinase (PR-DUB) complex, at least composed of BAP1, one of ASXL1, ASXL2 or (probably) ASXL3, and one of MBD5 or MBD6. The PR-DUB core associates with a number of accessory proteins, including FOXK1, FOXK2, KDM1B, HCFC1, YY1 and OGT; KDM1B specifically associates with ASXL2 PR-DUB complexes. The BAP1 deubiquitinase activity is not required for PR-DUB assembly. Homodimerizes (via coiled-coil hinge-region between the UCH and ULD domains) to mediate assembly of 2 copies of the BAP1-ASXL heterodimer into a bisymmetric tetramer; dimerization enhances association with nucleosomes. The PR-DUB complex associates with nucleosomes to mediate deubiquitination of 'lys-120' of histone H2AK118ub1 substrates; the association requires the positively charged C-terminal tail of BAP1. Interacts (via ULD domain) with ASXL1 (via DEUBAD domain); the interaction is direct and forms a ubiquitin binding cleft. The interaction with ASXL1 stabilizes BAP1 but is not required for nucleosome binding. Associates (via C-terminus) with nucleosome and chromatosome complexes through direct interaction with DNA and the histone3/4 dimer; this association displaces the histone-2A C-terminal tail, extending and orienting the H2AK118ub1 substrate towards the BAP1 deubiquitinase active site. Also interacts (via arginine finger) directly with the histone H2A-H2B acidic patch; this interaction is not critical for nucleosome-chromatosome association but may play a role in orienting the H2AK118ub1 substrate towards the PR-DUB complex active site. Interacts with BRCA1 (via the RING finger). Interacts (via HBM-like motif) with HCFC1. Interacts (via a C-terminal region overlapping the ULD domain) with YY1; the interaction is direct and requires the interaction with HCFC1. Interacts (when phosphorylated at Thr-493) with FOXK1. Interacts (when phosphorylated at Thr-493) with FOXK2; leading to recruitment of the PR-DUB complex and repression of FOXK2 target genes. Interacts (via non-classical PY-NLS) with TNPO1/transportin-1 (via HEAT repeats 8-12); the interaction is direct, mediates BAP1 nuclear localization and disrupts BAP1 homodimerization. Interacts (via C-terminus) with KPNA1/importin alpha5 and KPNA2/importin alpha1; these interactions can contribute to BAP1 nuclear localization but are less important than the interaction with TNPO1/transportin-1. The interaction with TNPO1/transportin-1 disrupts homodimerization and blocks ubiquitination by UBE2O. Ubiquitinated: monoubiquitinated at multiple sites within its nuclear localization signal (NLS) BY UBE2O, leading to cytoplasmic retention. Able to mediate autodeubiquitination via intramolecular interactions to counteract cytoplasmic retention. Monoubiquitinated on at least 4 sites near or within its PY-NLS. Highly expressed in testis, placenta and ovary. Expressed in breast. levels in the placenta increase over the course of pregnancy.

It is found in the cytoplasm. The protein resides in the nucleus. It localises to the chromosome. It carries out the reaction Thiol-dependent hydrolysis of ester, thioester, amide, peptide and isopeptide bonds formed by the C-terminal Gly of ubiquitin (a 76-residue protein attached to proteins as an intracellular targeting signal).. Its function is as follows. Deubiquitinating enzyme that plays a key role in chromatin by mediating deubiquitination of histone H2A and HCFC1. Catalytic component of the polycomb repressive deubiquitinase (PR-DUB) complex, a complex that specifically mediates deubiquitination of histone H2A monoubiquitinated at 'Lys-120' (H2AK119ub1). Does not deubiquitinate monoubiquitinated histone H2B. The PR-DUB complex is an epigenetic regulator of gene expression and acts as a transcriptional coactivator, affecting genes involved in development, cell communication, signaling, cell proliferation and cell viability. Antagonizes PRC1 mediated H2AK119ub1 monoubiquitination. As part of the PR-DUB complex, associates with chromatin enriched in histone marks H3K4me1, H3K4me3, and H3K27Ac, but not in H3K27me3. Recruited to specific gene-regulatory regions by YY1. Acts as a regulator of cell growth by mediating deubiquitination of HCFC1 N-terminal and C-terminal chains, with some specificity toward 'Lys-48'-linked polyubiquitin chains compared to 'Lys-63'-linked polyubiquitin chains. Deubiquitination of HCFC1 does not lead to increase stability of HCFC1. Interferes with the BRCA1 and BARD1 heterodimer activity by inhibiting their ability to mediate ubiquitination and autoubiquitination. It however does not mediate deubiquitination of BRCA1 and BARD1. Able to mediate autodeubiquitination via intramolecular interactions to counteract monoubiquitination at the nuclear localization signal (NLS), thereby protecting it from cytoplasmic sequestration. Negatively regulates epithelial-mesenchymal transition (EMT) of trophoblast stem cells during placental development by regulating genes involved in epithelial cell integrity, cell adhesion and cytoskeletal organization. The chain is Ubiquitin carboxyl-terminal hydrolase BAP1 from Homo sapiens (Human).